The following is a 224-amino-acid chain: MASEFSGQIQELLSRIPPVTRYILLGTAATTILTLCQLLSPSMLVLHYPLVVRQKQWYRLFTNYLYAGTGFDFIMNIYFFYQYSTYLENFVFARNAKKYIIYLVKVALLIDAFSLISGLGSALNQSLAAAIAYNWSLFNSFSKIQFLFGFHVQGKYLPYVLLGFSFLTGGLPSLVVLGFGIISAMIVNFFDSIHTPVVHRSNSPKLNSQKVSGTFIGKGKKLGT.

Helical transmembrane passes span 32-52 (ILTL…PLVV), 60-80 (LFTN…IYFF), 100-120 (IIYL…SGLG), 130-150 (AIAY…LFGF), and 162-182 (LGFS…FGII).

The protein belongs to the derlin family.

The protein resides in the endoplasmic reticulum membrane. This is an uncharacterized protein from Schizosaccharomyces pombe (strain 972 / ATCC 24843) (Fission yeast).